Reading from the N-terminus, the 857-residue chain is Bifunctional uridylyltransferase/uridylyl-removing enzyme (857 aa).

The tract at residues 1–322 (MDTTPELLLC…FPSESMVTRE (322 aa)) is uridylyltransferase. The uridylyl-removing stretch occupies residues 323 to 679 (INDRFVERQG…ARISPAGEGL (357 aa)). One can recognise an HD domain in the interval 441–563 (VDQHILMVVR…VGNGRYLTAL (123 aa)). 2 consecutive ACT domains span residues 680-760 (QVAV…DPTQ) and 788-857 (LLSV…ALAI).

The protein belongs to the GlnD family. The cofactor is Mg(2+).

It carries out the reaction [protein-PII]-L-tyrosine + UTP = [protein-PII]-uridylyl-L-tyrosine + diphosphate. The enzyme catalyses [protein-PII]-uridylyl-L-tyrosine + H2O = [protein-PII]-L-tyrosine + UMP + H(+). With respect to regulation, uridylyltransferase (UTase) activity is inhibited by glutamine, while glutamine activates uridylyl-removing (UR) activity. Modifies, by uridylylation and deuridylylation, the PII regulatory proteins (GlnB and homologs), in response to the nitrogen status of the cell that GlnD senses through the glutamine level. Under low glutamine levels, catalyzes the conversion of the PII proteins and UTP to PII-UMP and PPi, while under higher glutamine levels, GlnD hydrolyzes PII-UMP to PII and UMP (deuridylylation). Thus, controls uridylylation state and activity of the PII proteins, and plays an important role in the regulation of nitrogen assimilation and metabolism. This is Bifunctional uridylyltransferase/uridylyl-removing enzyme from Cupriavidus metallidurans (strain ATCC 43123 / DSM 2839 / NBRC 102507 / CH34) (Ralstonia metallidurans).